The chain runs to 749 residues: Cytosolic phospholipase A2 (749 aa).

Residues 1–178 (MSFIDPYQHI…MKKLLGPKKS (178 aa)) are phospholipid binding. Ser2 bears the Phosphoserine mark. The C2 domain occupies 6–122 (PYQHIIVEHQ…KVGEKKEVPF (117 aa)). Asp40, Thr41, Asp43, Asn65, Asp93, Ala94, and Asn95 together coordinate Ca(2+). Residues 140-740 (SCPDLRFSMA…SNVEARRFFN (601 aa)) enclose the PLA2c domain. Ser228 functions as the Nucleophile in the catalytic mechanism. Position 268 is a phosphothreonine (Thr268). Positions 427–456 (KHIVSNDSSDSDDESQEPKGTENEDAERDY) are disordered. Ser434, Ser435, and Ser437 each carry phosphoserine. Residue Ser505 is modified to Phosphoserine; by MAPK. Ser515 bears the Phosphoserine mark. Residue Lys541 forms a Glycyl lysine isopeptide (Lys-Gly) (interchain with G-Cter in SUMO2) linkage. Asp549 acts as the Proton acceptor in catalysis. Lys606 participates in a covalent cross-link: Glycyl lysine isopeptide (Lys-Gly) (interchain with G-Cter in SUMO2). A phosphoserine mark is found at Ser727 and Ser729.

Interacts with KAT5. Phosphorylated at both Ser-505 and Ser-727 in response to mitogenic stimuli.

The protein resides in the cytoplasm. The protein localises to the golgi apparatus membrane. Its subcellular location is the nucleus envelope. The catalysed reaction is a 1,2-diacyl-sn-glycero-3-phosphocholine + H2O = a 1-acyl-sn-glycero-3-phosphocholine + a fatty acid + H(+). It carries out the reaction a 1-O-alkyl-2-acyl-sn-glycero-3-phosphocholine + H2O = a 1-O-alkyl-sn-glycero-3-phosphocholine + a fatty acid + H(+). The enzyme catalyses a 1-acyl-sn-glycero-3-phosphocholine + H2O = sn-glycerol 3-phosphocholine + a fatty acid + H(+). It catalyses the reaction 1-hexadecanoyl-2-(5Z,8Z,11Z,14Z-eicosatetraenoyl)-sn-glycero-3-phosphocholine + H2O = 1-hexadecanoyl-sn-glycero-3-phosphocholine + (5Z,8Z,11Z,14Z)-eicosatetraenoate + H(+). The catalysed reaction is 1,2-di-(5Z,8Z,11Z,14Z-eicosatetraenoyl)-sn-glycero-3-phosphocholine + H2O = 1-(5Z,8Z,11Z,14Z-eicosatetraenoyl)-sn-glycero-3-phosphocholine + (5Z,8Z,11Z,14Z)-eicosatetraenoate + H(+). It carries out the reaction 1-octadecanoyl-2-(5Z,8Z,11Z,14Z-eicosatetraenoyl)-sn-glycero-3-phosphocholine + H2O = 1-octadecanoyl-sn-glycero-3-phosphocholine + (5Z,8Z,11Z,14Z)-eicosatetraenoate + H(+). The enzyme catalyses 1-hexadecanoyl-2-(9Z,12Z-octadecadienoyl)-sn-glycero-3-phosphocholine + H2O = (9Z,12Z)-octadecadienoate + 1-hexadecanoyl-sn-glycero-3-phosphocholine + H(+). It catalyses the reaction 1-octadecanoyl-2-(9Z,12Z,15Z-octadecatrienoyl)-sn-glycero-3-phosphocholine + H2O = (9Z,12Z,15Z)-octadecatrienoate + 1-octadecanoyl-sn-glycero-3-phosphocholine + H(+). The catalysed reaction is 1-(5Z,8Z,11Z,14Z-eicosatetraenoyl)-2-hexadecanoyl-sn-glycero-3-phosphocholine + H2O = 1-(5Z,8Z,11Z,14Z-eicosatetraenoyl)-sn-glycero-3-phosphocholine + hexadecanoate + H(+). It carries out the reaction 1-O-hexadecyl-2-(5Z,8Z,11Z,14Z)-eicosatetraenoyl-sn-glycero-3-phosphocholine + H2O = 1-O-hexadecyl-sn-glycero-3-phosphocholine + (5Z,8Z,11Z,14Z)-eicosatetraenoate + H(+). The enzyme catalyses 1,2-di-(9Z-octadecenoyl)-sn-glycero-3-phospho-(1'-sn-glycerol) + H2O = 1-(9Z-octadecenoyl)-sn-glycero-3-phospho-(1'-sn-glycerol) + (9Z)-octadecenoate + H(+). It catalyses the reaction 1-octadecanoyl-2-(5Z,8Z,11Z,14Z-eicosatetraenoyl)-sn-glycero-3-phosphate + H2O = 1-octadecanoyl-sn-glycero-3-phosphate + (5Z,8Z,11Z,14Z)-eicosatetraenoate + H(+). The catalysed reaction is 1-hexadecanoyl-sn-glycero-3-phosphocholine + H2O = sn-glycerol 3-phosphocholine + hexadecanoate + H(+). It carries out the reaction 2-(prostaglandin E2)-sn-glycero-3-phosphoethanolamine + H2O = sn-glycero-3-phosphoethanolamine + prostaglandin E2 + H(+). The enzyme catalyses 2-[(15S)-hydroxy-(5Z,8Z,11Z,13E)-eicosatetraenoyl]-sn-glycero-3-phosphocholine + H2O = (15S)-hydroxy-(5Z,8Z,11Z,13E)-eicosatetraenoate + sn-glycerol 3-phosphocholine + H(+). It catalyses the reaction 2-[(15R)-hydroxy-(5Z,8Z,11Z,13E)-eicosatetraenoyl]-sn-glycero-3-phosphocholine + H2O = (15R)-hydroxy-(5Z,8Z,11Z,13E)-eicosatetraenoate + sn-glycerol 3-phosphocholine + H(+). The catalysed reaction is 2-(prostaglandin E2)-sn-glycero-3-phosphocholine + H2O = prostaglandin E2 + sn-glycerol 3-phosphocholine + H(+). It carries out the reaction 2-[(11R)-hydroxy-(5Z,8Z,12E,14Z)-eicosatetraenoyl]-sn-glycero-3-phosphocholine + H2O = (11R)-hydroxy-(5Z,8Z,12E,14Z)-eicosatetraenoate + sn-glycerol 3-phosphocholine + H(+). The enzyme catalyses 1-(5Z,8Z,11Z,14Z-eicosatetraenoyl)-2-O-hexadecyl-sn-glycero-3-phosphocholine + H2O = 2-O-hexadecyl-sn-glycero-3-phosphocholine + (5Z,8Z,11Z,14Z)-eicosatetraenoate + H(+). It catalyses the reaction 1-octadecanoyl-2-(5Z,8Z,11Z,14Z-eicosatetraenoyl)-sn-glycero-3-phosphocholine + glycerol = 1-(5Z,8Z,11Z,14Z-eicosatetraenoyl)-glycerol + 1-octadecanoyl-sn-glycero-3-phosphocholine. The catalysed reaction is 1-octadecanoyl-2-(9Z,12Z,15Z-octadecatrienoyl)-sn-glycero-3-phosphocholine + glycerol = 1-(9Z,12Z,15Z-octadecatrienoyl)-glycerol + 1-octadecanoyl-sn-glycero-3-phosphocholine. It participates in membrane lipid metabolism; glycerophospholipid metabolism. Its pathway is lipid metabolism; arachidonate metabolism. It functions in the pathway lipid metabolism; prostaglandin biosynthesis. The protein operates within lipid metabolism; leukotriene B4 biosynthesis. With respect to regulation, activated by cytosolic calcium, which is necessary for binding to membrane lipids. Activated by phosphorylation in response to mitogenic stimuli. Functionally, has primarily calcium-dependent phospholipase and lysophospholipase activities, with a major role in membrane lipid remodeling and biosynthesis of lipid mediators of the inflammatory response. Plays an important role in embryo implantation and parturition through its ability to trigger prostanoid production. Preferentially hydrolyzes the ester bond of the fatty acyl group attached at sn-2 position of phospholipids (phospholipase A2 activity). Selectively hydrolyzes sn-2 arachidonoyl group from membrane phospholipids, providing the precursor for eicosanoid biosynthesis via the cyclooxygenase pathway. In an alternative pathway of eicosanoid biosynthesis, hydrolyzes sn-2 fatty acyl chain of eicosanoid lysophopholipids to release free bioactive eicosanoids. Hydrolyzes the ester bond of the fatty acyl group attached at sn-1 position of phospholipids (phospholipase A1 activity) only if an ether linkage rather than an ester linkage is present at the sn-2 position. This hydrolysis is not stereospecific. Has calcium-independent phospholipase A2 and lysophospholipase activities in the presence of phosphoinositides. Has O-acyltransferase activity. Catalyzes the transfer of fatty acyl chains from phospholipids to a primary hydroxyl group of glycerol (sn-1 or sn-3), potentially contributing to monoacylglycerol synthesis. This chain is Cytosolic phospholipase A2 (PLA2G4A), found in Equus caballus (Horse).